A 465-amino-acid polypeptide reads, in one-letter code: Phosphatidylserine synthase 1 (465 aa).

Over 1-35 the chain is Cytoplasmic; the sequence is MATTFRSQTLSKDDVNYRMHFRMINEQQVEDITIQ. The helical transmembrane segment at 36-56 threads the bilayer; it reads FFYKPHTISLLTVTVLSLMYF. Topologically, residues 57 to 70 are lumenal; sequence AFTRDDGDPDSNLR. The chain crosses the membrane as a helical span at residues 71–91; the sequence is VGLILLVSFFLVISVLAFPNG. Residues 92–102 lie on the Cytoplasmic side of the membrane; the sequence is PFTRPHPAIWR. The helical transmembrane segment at 103-123 threads the bilayer; that stretch reads IVFGLSVLYFLFLVFIIFLNW. The Lumenal segment spans residues 124–286; the sequence is DQVKALMFWL…WLDPKSSLQR (163 aa). A helical transmembrane segment spans residues 287 to 307; that stretch reads VMGVYLFMIIWQLTELNTFFL. At 308-309 the chain is on the cytoplasmic side; sequence KH. Residues 310–330 form a helical membrane-spanning segment; it reads IFVFPACHALSWCRILFIGII. Topologically, residues 331–355 are lumenal; that stretch reads TAPTVRQYYAYLTDTQCKRVGTQCW. The chain crosses the membrane as a helical span at residues 356-376; the sequence is VFGAIAFLEALACIKFGQDLF. Residues 377-380 lie on the Cytoplasmic side of the membrane; the sequence is SKTQ. A helical membrane pass occupies residues 381–401; that stretch reads ILYVILWLVCLAFITFLCLYV. Residues 402-465 are Lumenal-facing; the sequence is MVWYAENYGP…DSRTINGMEK (64 aa). The interval 446-465 is disordered; the sequence is CSTRKRRDSGDSRTINGMEK.

This sequence belongs to the phosphatidyl serine synthase family.

It localises to the endoplasmic reticulum membrane. The catalysed reaction is a 1,2-diacyl-sn-glycero-3-phosphoethanolamine + L-serine = a 1,2-diacyl-sn-glycero-3-phospho-L-serine + ethanolamine. The enzyme catalyses a 1,2-diacyl-sn-glycero-3-phosphocholine + L-serine = a 1,2-diacyl-sn-glycero-3-phospho-L-serine + choline. The protein operates within phospholipid metabolism; phosphatidylserine biosynthesis. In terms of biological role, catalyzes a base-exchange reaction in which the polar head group of phosphatidylethanolamine (PE) or phosphatidylcholine (PC) is replaced by L-serine. Catalyzes mainly the conversion of phosphatidylcholine but also converts, in vitro and to a lesser extent, phosphatidylethanolamine. This is Phosphatidylserine synthase 1 (ptdss1) from Danio rerio (Zebrafish).